The sequence spans 858 residues: Taste receptor type 1 member 3 (858 aa).

Positions 1–20 (MPALAIMGLSLAAFLELGMG) are cleaved as a signal peptide. At 21–572 (ASLCLSQQFK…RPKFLAWGEP (552 aa)) the chain is on the extracellular side. N-linked (GlcNAc...) asparagine; when associated with variant T-60 glycosylation occurs at Asn-58. Residues Asn-85, Asn-130, Asn-203, Asn-264, Asn-379, Asn-387, Asn-418, Asn-439, and Asn-482 are each glycosylated (N-linked (GlcNAc...) asparagine). The chain crosses the membrane as a helical span at residues 573 to 593 (VVLSLLLLLCLVLGLALAALG). Over 594–610 (LSVHHWDSPLVQASGGS) the chain is Cytoplasmic. Residues 611-631 (QFCFGLICLGLFCLSVLLFPG) traverse the membrane as a helical segment. Over 632-644 (RPSSASCLAQQPM) the chain is Extracellular. A helical membrane pass occupies residues 645–665 (AHLPLTGCLSTLFLQAAETFV). Topologically, residues 666–687 (ESELPLSWANWLCSYLRGLWAW) are cytoplasmic. A helical membrane pass occupies residues 688–708 (LVVLLATFVEAALCAWYLIAF). Topologically, residues 709–735 (PPEVVTDWSVLPTEVLEHCHVRSWVSL) are extracellular. Residues 736 to 756 (GLVHITNAMLAFLCFLGTFLV) traverse the membrane as a helical segment. Over 757 to 767 (QSQPGRYNRAR) the chain is Cytoplasmic. A helical transmembrane segment spans residues 768–788 (GLTFAMLAYFITWVSFVPLLA). Residues 789 to 796 (NVQVAYQP) lie on the Extracellular side of the membrane. Residues 797–817 (AVQMGAILVCALGILVTFHLP) form a helical membrane-spanning segment. Topologically, residues 818–858 (KCYVLLWLPKLNTQEFFLGRNAKKAADENSGGGEAAQGHNE) are cytoplasmic.

The protein belongs to the G-protein coupled receptor 3 family. TAS1R subfamily. Forms homodimers or heterodimers with TAS1R1 and TAS1R2. In terms of processing, the Thr-60 variant is predicted to introduce a novel N-linked glycosylation site at Asn-58. The addition of even a short carbohydrate group at Asn-58 is predicted to disrupt one of the contact surfaces required for stability of a dimer. Therefore a Thr-60 variant N-glycosylated at Asn-58 is predicted to be precluded from forming homodimers or heterodimers. As to expression, expressed in circumvallate, foliate and fungiform taste papillae as well as in taste buds on the palate. Also expressed in testis. Not expressed in brain, heart, kidney, liver or spleen. The topographic distribution in various taste papillae is different from those of other T1R members.

It is found in the cell membrane. Its function is as follows. Putative taste receptor. TAS1R1/TAS1R3 responds to the umami taste stimulus (the taste of monosodium glutamate) and also to most of the 20 standard L-amino acids, but not to their D-enantiomers or other compounds. TAS1R2/TAS1R3 recognizes diverse natural and synthetic sweeteners. TAS1R3 is essential for the recognition and response to the disaccharide trehalose. Sequence differences within and between species can significantly influence the selectivity and specificity of taste responses. The sequence is that of Taste receptor type 1 member 3 (Tas1r3) from Mus musculus (Mouse).